A 439-amino-acid polypeptide reads, in one-letter code: Xylose isomerase (439 aa).

Catalysis depends on residues His-101 and Asp-104. The Mg(2+) site is built by Glu-232, Glu-268, His-271, Asp-296, Asp-307, Asp-309, and Asp-339.

This sequence belongs to the xylose isomerase family. Homotetramer. Mg(2+) is required as a cofactor.

It is found in the cytoplasm. It catalyses the reaction alpha-D-xylose = alpha-D-xylulofuranose. The chain is Xylose isomerase from Marinomonas sp. (strain MWYL1).